Here is a 392-residue protein sequence, read N- to C-terminus: S-adenosylmethionine synthase (392 aa).

ATP is bound at residue His-20. Asp-22 lines the Mg(2+) pocket. Glu-48 contributes to the K(+) binding site. L-methionine-binding residues include Glu-61 and Gln-106. The tract at residues 106-116 (QSRDIINAIEK) is flexible loop. Residues 171-173 (DSK), Asp-248, 254-255 (RK), Ala-271, and Lys-275 each bind ATP. Asp-248 contacts L-methionine. Lys-279 lines the L-methionine pocket.

It belongs to the AdoMet synthase family. In terms of assembly, homotetramer; dimer of dimers. Mg(2+) is required as a cofactor. The cofactor is K(+).

The protein localises to the cytoplasm. The catalysed reaction is L-methionine + ATP + H2O = S-adenosyl-L-methionine + phosphate + diphosphate. It functions in the pathway amino-acid biosynthesis; S-adenosyl-L-methionine biosynthesis; S-adenosyl-L-methionine from L-methionine: step 1/1. Functionally, catalyzes the formation of S-adenosylmethionine (AdoMet) from methionine and ATP. The overall synthetic reaction is composed of two sequential steps, AdoMet formation and the subsequent tripolyphosphate hydrolysis which occurs prior to release of AdoMet from the enzyme. The polypeptide is S-adenosylmethionine synthase (Borreliella afzelii (strain PKo) (Borrelia afzelii)).